Here is a 773-residue protein sequence, read N- to C-terminus: Transducin-like enhancer protein 4 (773 aa).

3 disordered regions span residues 1–22, 140–162, and 182–357; these read MIRD…QPAQ, HGHG…AIPP, and LPIK…DPLA. Residues 1–136 are q domain; that stretch reads MIRDLSKMYP…AIIGQQLQAQ (136 aa). Positions 137–204 are GP domain; sequence HLSHGHGLPV…HQRDRDSIKS (68 aa). Basic and acidic residues predominate over residues 183–202; that stretch reads PIKDEKKHHDNDHQRDRDSI. Residues 203–214 show a composition bias toward low complexity; the sequence is KSSSVSPSASFR. Residues 205–274 are ccN domain; that stretch reads SSVSPSASFR…SPRGSPAHSP (70 aa). Phosphoserine occurs at positions 208, 212, 216, and 222. A compositionally biased stretch (basic and acidic residues) spans 215–252; it reads GSEKHRNSTDYSSESKKQKTEEKEIAARYDSDGEKSDD. An N6-acetyllysine modification is found at lysine 237. Serine 245 carries the post-translational modification Phosphoserine. Serine 250 bears the Phosphoserine; by CK2 mark. Position 265 is a phosphoserine; by CDK1 (serine 265). Residues serine 269 and serine 273 each carry the phosphoserine modification. Basic and acidic residues predominate over residues 273 to 289; sequence SPRENGLDKTRLLKKDA. The segment at 275-452 is SP domain; it reads RENGLDKTRL…PGGKPAYSFH (178 aa). Lysine 281 is subject to N6-acetyllysine. A compositionally biased stretch (low complexity) spans 290-305; that stretch reads PISPASVASSSSTPSS. Residue serine 292 is modified to Phosphoserine. Positions 317 to 328 are enriched in polar residues; that stretch reads TTPVSKSNTPTP. Threonine 318 carries the phosphothreonine modification. Serine 321 and serine 323 each carry phosphoserine. 4 positions are modified to phosphothreonine: threonine 325, threonine 327, threonine 334, and threonine 340. Position 419 is a phosphoserine (serine 419). 7 WD repeats span residues 485-523, 531-570, 575-614, 617-656, 658-697, 699-738, and 740-773; these read NHGE…NKSP, NRDN…PRIK, SSAP…LVRQ, GHTD…QLQQ, DFTS…KYQL, LHES…SIFQ, and KESS…EVIY.

The protein belongs to the WD repeat Groucho/TLE family. As to quaternary structure, homooligomer and heterooligomer with other family members. Interacts with PAX5. Interacts with LEF1, TCF7, TCF7L1 and TCF7L2. Interacts with ZNF703; TLE4 may mediate ZNF703 transcriptional repression. Interacts with SIX3 and SIX6. Interacts with PAX2. Interacts with TLE1. In terms of processing, phosphorylated. PAX5 binding increases phosphorylation. Ubiquitinated by XIAP/BIRC4. In terms of tissue distribution, expressed in bone marrow-derived macrophages.

It is found in the nucleus. In terms of biological role, transcriptional corepressor that binds to a number of transcription factors. Inhibits the transcriptional activation mediated by PAX5, and by CTNNB1 and TCF family members in Wnt signaling. The effects of full-length TLE family members may be modulated by association with dominant-negative AES. Essential for the transcriptional repressor activity of SIX3 during retina and lens development and for SIX3 transcriptional auto-repression. Involved in transcriptional repression of GNRHR and enhances MSX1-mediated transcriptional repression of CGA/alpha-GSU. The chain is Transducin-like enhancer protein 4 (Tle4) from Mus musculus (Mouse).